A 119-amino-acid chain; its full sequence is Large ribosomal subunit protein bL20 (119 aa).

The protein belongs to the bacterial ribosomal protein bL20 family.

Its function is as follows. Binds directly to 23S ribosomal RNA and is necessary for the in vitro assembly process of the 50S ribosomal subunit. It is not involved in the protein synthesizing functions of that subunit. The protein is Large ribosomal subunit protein bL20 of Thermoanaerobacter pseudethanolicus (strain ATCC 33223 / 39E) (Clostridium thermohydrosulfuricum).